The sequence spans 579 residues: XK-related protein 7 (579 aa).

Residues 1 to 18 (MAAKSDGAAASAGPDPEG) are compositionally biased toward low complexity. Residues 1–40 (MAAKSDGAAASAGPDPEGAAGGARGSAGGRGEAAAAAGPP) form a disordered region. The span at 19–31 (AAGGARGSAGGRG) shows a compositional bias: gly residues. A run of 2 helical transmembrane segments spans residues 59-79 (WVLC…WLAA) and 89-109 (YFSL…LLSF). The tract at residues 146-165 (GAFRTKEGSPEPGPQPAPSS) is disordered. Transmembrane regions (helical) follow at residues 260 to 280 (LLPA…LASY), 314 to 334 (GLAF…CIVG), 355 to 375 (GEEI…WFNV), 384 to 404 (MTLY…FWYS), and 415 to 435 (LIMV…MCVY). The disordered stretch occupies residues 466–510 (ADAITSPPRSLPRTTGAERDGASAGERAGTPTPPVFQVRPGLPPT).

Belongs to the XK family.

Its subcellular location is the cell membrane. The chain is XK-related protein 7 (XKR7) from Pan troglodytes (Chimpanzee).